The chain runs to 337 residues: 4-hydroxyproline 2-epimerase (337 aa).

Cysteine 91 acts as the Proton acceptor in catalysis. Substrate-binding positions include 92–93 (GH), aspartate 252, and 257–258 (GT).

This sequence belongs to the proline racemase family.

The enzyme catalyses trans-4-hydroxy-L-proline = cis-4-hydroxy-D-proline. Its function is as follows. Catalyzes the epimerization of trans-4-hydroxy-L-proline (t4LHyp) to cis-4-hydroxy-D-proline (c4DHyp). Is likely involved in a degradation pathway that converts t4LHyp to alpha-ketoglutarate. Displays no proline racemase activity. This Cereibacter sphaeroides (strain ATCC 17029 / ATH 2.4.9) (Rhodobacter sphaeroides) protein is 4-hydroxyproline 2-epimerase.